The sequence spans 488 residues: L-amino oxidase (488 aa).

FAD is bound by residues 60–61, 80–81, Arg-88, and 104–107; these read MS, EA, and GPMR. Positions 107 and 388 each coordinate substrate. A disulfide bond links Cys-347 and Cys-428. Residues Glu-474 and 481–486 contribute to the FAD site; that span reads GWIDST. Substrate is bound at residue 481 to 482; the sequence is GW.

Belongs to the flavin monoamine oxidase family. FIG1 subfamily. In terms of assembly, monomer. This is in contrast with most of its orthologs, that are non-covalently linked homodimers. FAD serves as cofactor. Post-translationally, N-glycosylated. Expressed by the venom gland.

The protein localises to the secreted. It catalyses the reaction an L-alpha-amino acid + O2 + H2O = a 2-oxocarboxylate + H2O2 + NH4(+). It carries out the reaction L-leucine + O2 + H2O = 4-methyl-2-oxopentanoate + H2O2 + NH4(+). Functionally, catalyzes an oxidative deamination of predominantly hydrophobic and aromatic L-amino acids, thus producing hydrogen peroxide that may contribute to the diverse toxic effects of this enzyme. Shows activity on L-Leu. Exhibits diverse biological activities, such as hemorrhage, hemolysis, edema, antibacterial and antiparasitic activities, as well as regulation of platelet aggregation. When tested on SW480 and SW620 human colon cancer cells, shows inhibition of cell proliferation, and induction of apoptosis, which is probably a consequence of the increased caspase-3 activity and the decreased Bcl-2 expression. The chain is L-amino oxidase from Trimeresurus purpureomaculatus (Mangrove pit viper).